A 473-amino-acid polypeptide reads, in one-letter code: MTNIEQDRWSRVKGRLRSSVGEDVYSSWFARMDLESVQPESVHLSVPTRFLKSWIQTHYSDRVLSCWQAEMPQVHRVDLTVRTAMRCAAPAKDAPAHAEPRRDDGRPAPELRATAIAPVSATHEALGGSPLDPRLTFGSFVIGRSNTLAHAAARQVAEGRRGDPVMFNPLYIHSGVGLGKTHLLQAVTWAGNSGTERKVLYLTAEKFMYGFVAALKSQTALAFKEALRGIDVLVIDDLQFLQGKTTQAEFCHTLNALIDAGRQVVIAADRPPSDLESLDERVRSRLAGGLVVEMASLGEDLRLGILKSRVTAARAHHASFDVPLPVLEYLARTITHNGRDLEGAINRLLAHSKLNAQPVTLEMAEREIRDLVRPQEPKRIKIEDIQRVVARQYNVSRSDLLSSRRTANVVRPRQVAMYLAKTLTLRSLPEIGRRFGGRDHTTVLHAVRKIEGLVAKDTALSDEVELLKRQLQE.

A domain I, interacts with DnaA modulators region spans residues 1–73; that stretch reads MTNIEQDRWS…LSCWQAEMPQ (73 aa). The domain II stretch occupies residues 73 to 129; it reads QVHRVDLTVRTAMRCAAPAKDAPAHAEPRRDDGRPAPELRATAIAPVSATHEALGGS. Residues 130 to 352 are domain III, AAA+ region; it reads PLDPRLTFGS…GAINRLLAHS (223 aa). ATP is bound by residues glycine 177, glycine 179, lysine 180, and threonine 181. The segment at 353–473 is domain IV, binds dsDNA; that stretch reads KLNAQPVTLE…VELLKRQLQE (121 aa).

Belongs to the DnaA family. As to quaternary structure, oligomerizes as a right-handed, spiral filament on DNA at oriC.

It is found in the cytoplasm. Functionally, plays an essential role in the initiation and regulation of chromosomal replication. ATP-DnaA binds to the origin of replication (oriC) to initiate formation of the DNA replication initiation complex once per cell cycle. Binds the DnaA box (a 9 base pair repeat at the origin) and separates the double-stranded (ds)DNA. Forms a right-handed helical filament on oriC DNA; dsDNA binds to the exterior of the filament while single-stranded (ss)DNA is stabiized in the filament's interior. The ATP-DnaA-oriC complex binds and stabilizes one strand of the AT-rich DNA unwinding element (DUE), permitting loading of DNA polymerase. After initiation quickly degrades to an ADP-DnaA complex that is not apt for DNA replication. Binds acidic phospholipids. This chain is Chromosomal replication initiator protein DnaA, found in Rhodopseudomonas palustris (strain BisB18).